Here is a 104-residue protein sequence, read N- to C-terminus: DNA-directed RNA polymerase subunit omega (104 aa).

A disordered region spans residues 53–104 (EIESGNVTIHPDPEGKREAVRRRIEEEKRRKEEEEKKIKEQIAKEKEDGEKI). Residues 63–104 (PDPEGKREAVRRRIEEEKRRKEEEEKKIKEQIAKEKEDGEKI) are compositionally biased toward basic and acidic residues.

It belongs to the RNA polymerase subunit omega family. The RNAP catalytic core consists of 2 alpha, 1 beta, 1 beta' and 1 omega subunit. When a sigma factor is associated with the core the holoenzyme is formed, which can initiate transcription.

The enzyme catalyses RNA(n) + a ribonucleoside 5'-triphosphate = RNA(n+1) + diphosphate. Its function is as follows. Promotes RNA polymerase assembly. Latches the N- and C-terminal regions of the beta' subunit thereby facilitating its interaction with the beta and alpha subunits. In Streptococcus pneumoniae serotype 2 (strain D39 / NCTC 7466), this protein is DNA-directed RNA polymerase subunit omega.